Here is a 570-residue protein sequence, read N- to C-terminus: Urease subunit alpha (570 aa).

The region spanning 131 to 570 is the Urease domain; that stretch reads GGFDSHIHFI…LPLAQRYFMF (440 aa). Ni(2+)-binding residues include His-136, His-138, and Lys-219. Residue Lys-219 is modified to N6-carboxylysine. His-221 contacts substrate. Positions 248 and 274 each coordinate Ni(2+). Catalysis depends on His-322, which acts as the Proton donor. A Ni(2+)-binding site is contributed by Asp-362.

This sequence belongs to the metallo-dependent hydrolases superfamily. Urease alpha subunit family. As to quaternary structure, heterotrimer of UreA (gamma), UreB (beta) and UreC (alpha) subunits. Three heterotrimers associate to form the active enzyme. Ni cation serves as cofactor. Carboxylation allows a single lysine to coordinate two nickel ions.

It is found in the cytoplasm. The catalysed reaction is urea + 2 H2O + H(+) = hydrogencarbonate + 2 NH4(+). Its pathway is nitrogen metabolism; urea degradation; CO(2) and NH(3) from urea (urease route): step 1/1. The polypeptide is Urease subunit alpha (Rhodopseudomonas palustris (strain ATCC BAA-98 / CGA009)).